The sequence spans 363 residues: Pyrimidine monooxygenase RutA (363 aa).

FMN-binding positions include 49–50, Asn-115, Glu-124, 140–141, and Ser-190; these read IK and RY.

The protein belongs to the NtaA/SnaA/DszA monooxygenase family. RutA subfamily.

It carries out the reaction uracil + FMNH2 + NADH + O2 = (Z)-3-ureidoacrylate + FMN + NAD(+) + H2O + H(+). The catalysed reaction is thymine + FMNH2 + NADH + O2 = (Z)-2-methylureidoacrylate + FMN + NAD(+) + H2O + H(+). Its function is as follows. Catalyzes the pyrimidine ring opening between N-3 and C-4 by an unusual flavin hydroperoxide-catalyzed mechanism, adding oxygen atoms in the process to yield ureidoacrylate peracid, that immediately reacts with FMN forming ureidoacrylate and FMN-N(5)-oxide. The FMN-N(5)-oxide reacts spontaneously with NADH to produce FMN. Requires the flavin reductase RutF to regenerate FMN in vivo. The chain is Pyrimidine monooxygenase RutA from Klebsiella variicola (strain At-22).